A 397-amino-acid polypeptide reads, in one-letter code: Cysteine protease ATG4A (397 aa).

Cys79 (nucleophile) is an active-site residue. Residues Asp279 and His281 contribute to the active site. An LIR motif is present at residues 392–395 (FEIL).

It belongs to the peptidase C54 family.

It is found in the cytoplasm. It catalyses the reaction [protein]-C-terminal L-amino acid-glycyl-phosphatidylethanolamide + H2O = [protein]-C-terminal L-amino acid-glycine + a 1,2-diacyl-sn-glycero-3-phosphoethanolamine. Cysteine protease that plays a key role in autophagy by mediating both proteolytic activation and delipidation of ATG8 family proteins. The protease activity is required for proteolytic activation of ATG8 family proteins: cleaves the C-terminal amino acid of ATG8 proteins to reveal a C-terminal glycine. Exposure of the glycine at the C-terminus is essential for ATG8 proteins conjugation to phosphatidylethanolamine (PE) and insertion to membranes, which is necessary for autophagy. Protease activity is also required to counteract formation of high-molecular weight conjugates of ATG8 proteins (ATG8ylation): acts as a deubiquitinating-like enzyme that removes ATG8 conjugated to other proteins, such as ATG3. In addition to the protease activity, also mediates delipidation of ATG8 family proteins. Catalyzes delipidation of PE-conjugated forms of ATG8 proteins during macroautophagy. The protein is Cysteine protease ATG4A of Xenopus laevis (African clawed frog).